Here is a 244-residue protein sequence, read N- to C-terminus: Cell division protein ZapD (244 aa).

It belongs to the ZapD family. As to quaternary structure, interacts with FtsZ.

It is found in the cytoplasm. Cell division factor that enhances FtsZ-ring assembly. Directly interacts with FtsZ and promotes bundling of FtsZ protofilaments, with a reduction in FtsZ GTPase activity. In Shewanella oneidensis (strain ATCC 700550 / JCM 31522 / CIP 106686 / LMG 19005 / NCIMB 14063 / MR-1), this protein is Cell division protein ZapD.